Consider the following 1349-residue polypeptide: Aldehyde oxidase 2 (1349 aa).

A 2Fe-2S ferredoxin-type domain is found at 8–96 (DELVFFVNGR…GAAVTTVEGV (89 aa)). [2Fe-2S] cluster-binding residues include Cys-47, Cys-52, Cys-55, and Cys-78. Gln-117 lines the Mo-molybdopterin pocket. The [2Fe-2S] cluster site is built by Cys-118, Cys-121, Cys-153, and Cys-155. Position 155 (Cys-155) interacts with Mo-molybdopterin. One can recognise an FAD-binding PCMH-type domain in the interval 240-425 (FYGERVTWIS…ESVHIPHSQK (186 aa)). FAD-binding positions include 268–275 (LVVGNTSL), Ala-349, Ser-358, His-362, Asp-371, and Leu-415. Residues 816–817 (GF), 1098–1101 (ASVG), Gln-1213, and Leu-1278 contribute to the Mo-molybdopterin site. Glu-1280 acts as the Proton acceptor; for azaheterocycle hydroxylase activity in catalysis.

Belongs to the xanthine dehydrogenase family. Homodimer. It depends on [2Fe-2S] cluster as a cofactor. FAD is required as a cofactor. The cofactor is Mo-molybdopterin. Only detected at very few levels in nasal mucosa.

Its subcellular location is the cytoplasm. It carries out the reaction an aldehyde + O2 + H2O = a carboxylate + H2O2 + H(+). Its function is as follows. Oxidase with broad substrate specificity, oxidizing aromatic azaheterocycles, such as phthalazine, as well as aldehydes, such as benzaldehyde and retinal. In Macaca fascicularis (Crab-eating macaque), this protein is Aldehyde oxidase 2 (AOX2).